The chain runs to 483 residues: Matrix metalloproteinase-20 (483 aa).

An N-terminal signal peptide occupies residues M1 to A22. The propeptide at A23–N107 is activation peptide. A Cysteine switch motif is present at residues P98–V105. C100 provides a ligand contact to Zn(2+). E164, A165, and D166 together coordinate Ca(2+). Zn(2+) contacts are provided by H176 and D178. 4 residues coordinate Ca(2+): D183, G184, R186, and T188. H191 serves as a coordination point for Zn(2+). E197, G198, G200, and D202 together coordinate Ca(2+). H204 is a binding site for Zn(2+). Ca(2+) is bound by residues D206 and E209. A Zn(2+)-binding site is contributed by H226. E227 is an active-site residue. Zn(2+) contacts are provided by H230 and H236. 4 Hemopexin repeats span residues P293–L343, M344–R389, V391–V439, and N440–C483. Residues C296 and C483 are joined by a disulfide bond.

It belongs to the peptidase M10A family. Zn(2+) is required as a cofactor. Ca(2+) serves as cofactor. Autoactivates at least at the 107-Asn-|-Tyr-108 site. In terms of tissue distribution, expressed specifically in the enamel organ.

The protein localises to the secreted. It is found in the extracellular space. The protein resides in the extracellular matrix. Its function is as follows. Degrades amelogenin, the major protein component of the enamel matrix and two of the macromolecules characterizing the cartilage extracellular matrix: aggrecan and the cartilage oligomeric matrix protein (COMP). May play a central role in tooth enamel formation. The polypeptide is Matrix metalloproteinase-20 (MMP20) (Sus scrofa (Pig)).